The following is a 119-amino-acid chain: Beta-2-microglobulin (119 aa).

Residues 1–20 (MARFVVVPLLVLVSLFGLEA) form the signal peptide. The Ig-like C1-type domain occupies 25 to 114 (PKIQVYSRYP…VTFSTPKTVK (90 aa)). A disulfide bridge links Cys-45 with Cys-100.

It belongs to the beta-2-microglobulin family. In terms of assembly, heterodimer of an alpha chain and a beta chain. Beta-2-microglobulin is the beta-chain of major histocompatibility complex class I molecules.

The protein resides in the secreted. In terms of biological role, component of the class I major histocompatibility complex (MHC). Involved in the presentation of peptide antigens to the immune system. The chain is Beta-2-microglobulin (B2M) from Saguinus oedipus (Cotton-top tamarin).